Here is a 51-residue protein sequence, read N- to C-terminus: Mating pheromone Er-23 (51 aa).

5 disulfides stabilise this stretch: Cys-3–Cys-24, Cys-6–Cys-16, Cys-13–Cys-47, Cys-27–Cys-40, and Cys-35–Cys-51.

The protein localises to the secreted. Mating ciliate pheromones (or gamones) are diffusible extracellular communication signals that distinguish different intraspecific classes of cells commonly referred to as 'mating types'. They prepare the latter for conjugation by changing their cell surface properties. The sequence is that of Mating pheromone Er-23 (MAT23) from Euplotes raikovi.